The primary structure comprises 288 residues: Glucose-1-phosphate thymidylyltransferase (288 aa).

The Mg(2+) site is built by Asp-108 and Asp-223.

It belongs to the glucose-1-phosphate thymidylyltransferase family. Homotetramer. Mg(2+) is required as a cofactor.

The enzyme catalyses dTTP + alpha-D-glucose 1-phosphate + H(+) = dTDP-alpha-D-glucose + diphosphate. Catalyzes the formation of dTDP-glucose, from dTTP and glucose 1-phosphate, as well as its pyrophosphorolysis. The polypeptide is Glucose-1-phosphate thymidylyltransferase (rmlA1) (Neisseria meningitidis serogroup A / serotype 4A (strain DSM 15465 / Z2491)).